Reading from the N-terminus, the 328-residue chain is Probable GDP-L-fucose synthase 1 (328 aa).

25–31 (GHRGLVG) contributes to the NADP(+) binding site. Catalysis depends on Tyr-152, which acts as the Proton donor/acceptor. Residues Lys-156, 179 to 182 (PTNL), and His-195 each bind NADP(+). Positions 203, 218, 225, and 285 each coordinate substrate.

Belongs to the NAD(P)-dependent epimerase/dehydratase family. Fucose synthase subfamily. In terms of assembly, homodimer.

It carries out the reaction GDP-beta-L-fucose + NADP(+) = GDP-4-dehydro-alpha-D-rhamnose + NADPH + H(+). It participates in nucleotide-sugar biosynthesis; GDP-L-fucose biosynthesis via de novo pathway; GDP-L-fucose from GDP-alpha-D-mannose: step 2/2. Its function is as follows. Catalyzes the two-step NADP-dependent conversion of GDP-4-dehydro-6-deoxy-D-mannose to GDP-fucose, involving an epimerase and a reductase reaction. The protein is Probable GDP-L-fucose synthase 1 of Oryza sativa subsp. japonica (Rice).